A 156-amino-acid polypeptide reads, in one-letter code: Small ribosomal subunit protein uS7 (156 aa).

This sequence belongs to the universal ribosomal protein uS7 family. As to quaternary structure, part of the 30S ribosomal subunit. Contacts proteins S9 and S11.

Functionally, one of the primary rRNA binding proteins, it binds directly to 16S rRNA where it nucleates assembly of the head domain of the 30S subunit. Is located at the subunit interface close to the decoding center, probably blocks exit of the E-site tRNA. In Clostridium perfringens (strain ATCC 13124 / DSM 756 / JCM 1290 / NCIMB 6125 / NCTC 8237 / Type A), this protein is Small ribosomal subunit protein uS7.